A 411-amino-acid chain; its full sequence is Branched-chain-amino-acid aminotransferase, cytosolic (411 aa).

N6-(pyridoxal phosphate)lysine is present on Lys-247.

This sequence belongs to the class-IV pyridoxal-phosphate-dependent aminotransferase family. In terms of assembly, homodimer. Pyridoxal 5'-phosphate serves as cofactor. Post-translationally, the N-terminus is blocked. Brain, low expression in ovary and placenta, but not found in liver, kidney, and skeletal muscle.

It localises to the cytoplasm. The enzyme catalyses L-leucine + 2-oxoglutarate = 4-methyl-2-oxopentanoate + L-glutamate. The catalysed reaction is L-isoleucine + 2-oxoglutarate = (S)-3-methyl-2-oxopentanoate + L-glutamate. It carries out the reaction L-valine + 2-oxoglutarate = 3-methyl-2-oxobutanoate + L-glutamate. Functionally, catalyzes the first reaction in the catabolism of the essential branched chain amino acids leucine, isoleucine, and valine. In Rattus norvegicus (Rat), this protein is Branched-chain-amino-acid aminotransferase, cytosolic (Bcat1).